Here is a 489-residue protein sequence, read N- to C-terminus: MDYKHNFATSPDSFLDGRQNPLLYTDFLSSNKELIYKQPSGPGLVDSAYNFHHQNSLHDRSVQENLGPMFQPFGVDISHLPITNPPIFQSSLPAFDQPVYKRRISISNGQISQLGEDLETVENLYNCQPPILSSKAQQNPNPQQVANPSAAIYPSFSSNELQNVPQPHEQATVIPEAAPQTGSKNIYAAMTPYDSNIKLNIPAVAATCDIPSATPSIPSGDSTMNQAYINMQLRLQAQMQTKAWKNAQLNVHPCTPASNSSVSSSSSCQNINDHNIENQSVHSSISHGVNHHTVNNSCQNAELNISSSLPYESKCPDVNLTHANSKPQYKDATSALKNNINSEKDVHTAPFSSMHTTATFQIKQEARPQKIENNTAGLKDGAKAWKRARLLERNRIAASKCRQRKKMSQLQLQREFDQISKENTMMKKKIENYEKLVQKMKKISRLHMQECTINGGNNSYQSLQNKDSDVNGFLKMIEEMIRSSSLYDE.

The region spanning 384 to 447 (AWKRARLLER…QKMKKISRLH (64 aa)) is the bZIP domain. The interval 386–406 (KRARLLERNRIAASKCRQRKK) is basic motif. A leucine-zipper region spans residues 412 to 419 (LQREFDQI).

It belongs to the bZIP family.

It is found in the nucleus. Functionally, transcriptional activator of promoters containing ATF/CREB sites. Can independently stimulate transcription through ATF/CREB sites. Important for a variety of biological functions including growth on non-optimal carbon sources. Regulates the expression of COS8. Has efficient silencing blocking activities. The protein is ATF/CREB activator 1 (ACA1) of Saccharomyces cerevisiae (strain ATCC 204508 / S288c) (Baker's yeast).